The primary structure comprises 342 residues: Isopentenyl-diphosphate delta-isomerase (342 aa).

11–12 (RK) is a binding site for substrate. Residues Ser-68, 69–71 (SMT), Ser-99, and Asn-127 contribute to the FMN site. 99 to 101 (SMR) serves as a coordination point for substrate. Substrate is bound at residue Gln-162. Position 163 (Glu-163) interacts with Mg(2+). Residues Lys-194, Thr-224, 274 to 276 (GFK), and 295 to 296 (AG) contribute to the FMN site.

It belongs to the IPP isomerase type 2 family. In terms of assembly, homooctamer. Dimer of tetramers. Requires FMN as cofactor. NADPH serves as cofactor. Mg(2+) is required as a cofactor.

It is found in the cytoplasm. The enzyme catalyses isopentenyl diphosphate = dimethylallyl diphosphate. In terms of biological role, involved in the biosynthesis of isoprenoids. Catalyzes the 1,3-allylic rearrangement of the homoallylic substrate isopentenyl (IPP) to its allylic isomer, dimethylallyl diphosphate (DMAPP). This is Isopentenyl-diphosphate delta-isomerase from Rickettsia conorii (strain ATCC VR-613 / Malish 7).